Consider the following 99-residue polypeptide: Signal recognition particle 19 kDa protein (99 aa).

Belongs to the SRP19 family. Part of the signal recognition particle protein translocation system, which is composed of SRP and FtsY. Archaeal SRP consists of a 7S RNA molecule of 300 nucleotides and two protein subunits: SRP54 and SRP19.

The protein localises to the cytoplasm. In terms of biological role, involved in targeting and insertion of nascent membrane proteins into the cytoplasmic membrane. Binds directly to 7S RNA and mediates binding of the 54 kDa subunit of the SRP. The protein is Signal recognition particle 19 kDa protein of Pyrococcus abyssi (strain GE5 / Orsay).